The chain runs to 544 residues: Potential vesicular glutamate transporter vglu-3 (544 aa).

The Cytoplasmic segment spans residues 1-49 (MPNGSIRNCANAVADTVRQTFSRKTWEHKEQLQTITEQKKFFLRKVRWQ). The chain crosses the membrane as a helical span at residues 50-70 (IAILAHFGFAISFGIRSNFGV). At 71-104 (AKNRMVNNFTDAYGEVHEREFLWTGAEVGMMESS) the chain is on the extracellular side. Residue Asn-78 is glycosylated (N-linked (GlcNAc...) asparagine). Residues 105-125 (FFYGYAASQIPAGVLAAKFAP) form a helical membrane-spanning segment. Residues 126-127 (NK) lie on the Cytoplasmic side of the membrane. The chain crosses the membrane as a helical span at residues 128–148 (IFMLGILVASFMNILSAISFN). The Extracellular portion of the chain corresponds to 149–154 (FHPYTD). The chain crosses the membrane as a helical span at residues 155-175 (IFVMVVQAVQGLALGVLYPAM). Topologically, residues 176–193 (HGVWKFWAPPLERSKLAT) are cytoplasmic. Residues 194-214 (TAFTGSSVGVMTGLPASAYLV) form a helical membrane-spanning segment. Topologically, residues 215–219 (SHFSW) are extracellular. The helical transmembrane segment at 220-240 (STPFYVFGVVGIIWSLIWMYV) threads the bilayer. The Cytoplasmic segment spans residues 241–285 (SSHSPETHGYISDDEKKQVTEKIGDVAVKNMSLTTLPWRDMMTSS). A helical transmembrane segment spans residues 286 to 306 (AVWAIIICTFCRSWGFFLLLG). Over 307-323 (NQLTYMKDVLHIDIKNS) the chain is Extracellular. A helical transmembrane segment spans residues 324 to 344 (GFISIFPQFGMCIVTLATGQL). Over 345-360 (CDYLRSSGKMSTEAVR) the chain is Cytoplasmic. A helical transmembrane segment spans residues 361 to 381 (KSVNTFGFTVEAMMLGCLAFV). Topologically, residues 382–384 (RDP) are extracellular. Residues 385–405 (VIAVTCLVIACTGSGSVLSGF) form a helical membrane-spanning segment. Residues 406–416 (NVNHFDIAPRY) lie on the Cytoplasmic side of the membrane. A helical transmembrane segment spans residues 417–437 (APILMGIANGLGAVAGVGGMV). The Extracellular segment spans residues 438-450 (TNTVTYQNPDGWK). Residues 451–471 (WVFLLAMAIDIFGVIFFLIFA) traverse the membrane as a helical segment. The Cytoplasmic segment spans residues 472 to 544 (KGDVLPWARE…APAEKSESSS (73 aa)). Residues 501–544 (SLSRKTRNREGDTSYEKMEEDSEMKPCSKKVEARAPAEKSESSS) are disordered. Residues 508–544 (NREGDTSYEKMEEDSEMKPCSKKVEARAPAEKSESSS) show a composition bias toward basic and acidic residues.

It belongs to the major facilitator superfamily. Sodium/anion cotransporter family. VGLUT subfamily.

It is found in the membrane. This is Potential vesicular glutamate transporter vglu-3 (vglu-3) from Caenorhabditis elegans.